The chain runs to 557 residues: Membrane protein insertase YidC (557 aa).

Helical transmembrane passes span 371–391 (WGWS…PLSA), 437–457 (LGGC…YWVL), and 515–535 (PIVF…YWVV).

This sequence belongs to the OXA1/ALB3/YidC family. Type 1 subfamily. Interacts with the Sec translocase complex via SecD. Specifically interacts with transmembrane segments of nascent integral membrane proteins during membrane integration.

The protein resides in the cell inner membrane. Its function is as follows. Required for the insertion and/or proper folding and/or complex formation of integral membrane proteins into the membrane. Involved in integration of membrane proteins that insert both dependently and independently of the Sec translocase complex, as well as at least some lipoproteins. Aids folding of multispanning membrane proteins. In Polynucleobacter necessarius subsp. necessarius (strain STIR1), this protein is Membrane protein insertase YidC.